We begin with the raw amino-acid sequence, 322 residues long: Crystallin J1A (322 aa).

Belongs to the ADP-ribosylglycohydrolase family. J1 crystallin subfamily. Expressed in the rhopalia. Present in both the large and small eyes.

This chain is Crystallin J1A, found in Tripedalia cystophora (Jellyfish).